Reading from the N-terminus, the 344-residue chain is uncharacterized protein (344 aa).

A signal peptide spans 1–20 (MEIRIMLFILMMMVMPVSYA).

The protein belongs to the fimbrial protein family.

Its function is as follows. Part of the yehABCD fimbrial operon. Could contribute to adhesion to various surfaces in specific environmental niches. This is an uncharacterized protein from Escherichia coli (strain K12).